The sequence spans 689 residues: Solute carrier family 22 member 23 (689 aa).

2 disordered regions span residues 1–55 (MAID…PLPA) and 162–188 (TASW…GKGN). Residue asparagine 24 is glycosylated (N-linked (GlcNAc...) asparagine). Positions 165-177 (WGTTSNRSNSSDT) are enriched in polar residues. Transmembrane regions (helical) follow at residues 229–249 (FSLL…ADWV) and 253–273 (PVLL…ALSV). Asparagine 274 carries an N-linked (GlcNAc...) asparagine glycan. The next 8 membrane-spanning stretches (helical) occupy residues 283–303 (FFEG…RIEL), 310–330 (FIIT…MPGL), 339–359 (VLQA…SIFP), 466–486 (TMAS…KFLG), 489–509 (GGLL…LGLL), 541–561 (IAFS…SVFF), 572–592 (CGGL…APII), and 601–621 (FLHH…ILLL).

The protein belongs to the major facilitator (TC 2.A.1) superfamily. Organic cation transporter (TC 2.A.1.19) family.

It localises to the membrane. The sequence is that of Solute carrier family 22 member 23 (Slc22a23) from Mus musculus (Mouse).